We begin with the raw amino-acid sequence, 413 residues long: Sensor protein SphS (413 aa).

Residues 176–398 enclose the Histidine kinase domain; the sequence is DVAHELKTPL…WLRVQLPQEP (223 aa). Histidine 179 is modified (phosphohistidine; by autocatalysis).

The protein resides in the cytoplasm. It catalyses the reaction ATP + protein L-histidine = ADP + protein N-phospho-L-histidine.. Functionally, member of the two-component regulatory system SphR/SphS. Sensory kinase. Is involved in inducible production of alkaline phosphatase in response to phosphate limitation as it is directly involved in the regulation of phoA transcription in response to phosphate limitation. SphS functions as a protein kinase that phosphorylates SphR. The polypeptide is Sensor protein SphS (sphS) (Synechococcus elongatus (strain ATCC 33912 / PCC 7942 / FACHB-805) (Anacystis nidulans R2)).